We begin with the raw amino-acid sequence, 893 residues long: UPF0182 protein CLM_0018 (893 aa).

The next 7 helical transmembrane spans lie at 9-29 (IPLF…NFII), 49-69 (AIII…WMYY), 94-114 (LFFI…SSSY), 154-174 (VIIS…FILE), 202-222 (LAIV…IKIW), 246-266 (FYKI…LSIV), and 273-293 (VSVC…ASFL).

Belongs to the UPF0182 family.

It is found in the cell membrane. The protein is UPF0182 protein CLM_0018 of Clostridium botulinum (strain Kyoto / Type A2).